Here is a 243-residue protein sequence, read N- to C-terminus: Beta-glucanase (243 aa).

An N-terminal signal peptide occupies residues 1 to 27 (MSYRVKRMLMLLVTGLFLSLSTFAASA). The GH16 domain occupies 29-243 (AQTGGSFYEP…SLHWVRYTKR (215 aa)). A disulfide bond links Cys61 and Cys90. Glu134 (nucleophile) is an active-site residue. The active-site Proton donor is the Glu138.

Belongs to the glycosyl hydrolase 16 family.

It catalyses the reaction Hydrolysis of (1-&gt;4)-beta-D-glucosidic linkages in beta-D-glucans containing (1-&gt;3)- and (1-&gt;4)-bonds.. The polypeptide is Beta-glucanase (bg1) (Bacillus licheniformis).